The primary structure comprises 182 residues: CDP-diacylglycerol--glycerol-3-phosphate 3-phosphatidyltransferase (182 aa).

The Cytoplasmic segment spans residues 1–12 (MQLNIPTWLTLF). The chain crosses the membrane as a helical span at residues 13-37 (RVVLIPFFVLAFYLPFVWAPMVCAI). At 38–60 (IFVFAAATDWFDGFLARRWKQTT) the chain is on the periplasmic side. A helical membrane pass occupies residues 61–81 (RFGAFLDPVADKVMVAVALVL). Residues 82–86 (VAEHY) lie on the Cytoplasmic side of the membrane. Residues 87 to 107 (HSWWITLPAATMIAREIIISS) form a helical membrane-spanning segment. The Periplasmic portion of the chain corresponds to 108–145 (LREWMAEIGKRSSVAVSWVGKVKTMAQMGSLVGLLWRP). Residues 146–168 (DHNVELASFVLLYIAAVLTFWSM) traverse the membrane as a helical segment. The Cytoplasmic segment spans residues 169–181 (FQYLNAAWSDLLE).

The protein belongs to the CDP-alcohol phosphatidyltransferase class-I family.

It is found in the cell inner membrane. It carries out the reaction a CDP-1,2-diacyl-sn-glycerol + sn-glycerol 3-phosphate = a 1,2-diacyl-sn-glycero-3-phospho-(1'-sn-glycero-3'-phosphate) + CMP + H(+). It participates in phospholipid metabolism; phosphatidylglycerol biosynthesis; phosphatidylglycerol from CDP-diacylglycerol: step 1/2. Its function is as follows. Catalyzes the conversion of cytidine diphosphate diacylglycerol (CDP-DG) and glycerol 3-phosphate into phosphatidylglycerol. Essential for the synthesis of anionic phospholipids, thereby playing a role in balancing the ratio of zwitterionic and anionic phospholipids, which is thought to be important for normal membrane function. The polypeptide is CDP-diacylglycerol--glycerol-3-phosphate 3-phosphatidyltransferase (Yersinia pestis bv. Antiqua (strain Antiqua)).